The primary structure comprises 372 residues: MAFKQLLAALSVALTLQVTQAAPNLDKRVACPDGVHTASNAACCAWFPVLDDIQQNLFHGGQCGAEAHEALRMVFHDSIAISPKLQSQGKFGGGGADGSIITFSSIETTYHPNIGLDEVVAIQKPFIAKHGVTRGDFIAFAGAVGVSNCPGAPQMQFFLGRPEATQAAPDGLVPEPFHTIDQVLARMLDAGGFDEIETVWLLSAHSIAAANDVDPTISGLPFDSTPGQFDSQFFVETQLRGTAFPGKTGIQGTVMSPLKGEMRLQTDHLFARDSRTACEWQSFVNNQTKLQEDFQFIFTALSTLGHDMNAMTDCSEVIPAPKPVNFGPSFFPAGKTHADIEQACASTPFPTLITAPGPSASVARIPPPPSPN.

Positions 1 to 21 (MAFKQLLAALSVALTLQVTQA) are cleaved as a signal peptide. Positions 22 to 28 (APNLDKR) are excised as a propeptide. 4 disulfide bridges follow: C31/C44, C43/C314, C63/C149, and C278/C344. H76 (proton acceptor) is an active-site residue. Ca(2+)-binding residues include D77, G95, D97, and S99. Residue H205 coordinates heme b. Positions 206, 223, 225, 228, and 230 each coordinate Ca(2+). N286 is a glycosylation site (N-linked (GlcNAc...) asparagine).

Belongs to the peroxidase family. Ligninase subfamily. Requires heme b as cofactor. Ca(2+) serves as cofactor.

It catalyses the reaction 1-(3,4-dimethoxyphenyl)-2-(2-methoxyphenoxy)propane-1,3-diol + H2O2 = 3,4-dimethoxybenzaldehyde + guaiacol + glycolaldehyde + H2O. It carries out the reaction 2 (3,4-dimethoxyphenyl)methanol + H2O2 = 2 (3,4-dimethoxyphenyl)methanol radical + 2 H2O. The protein operates within secondary metabolite metabolism; lignin degradation. Functionally, depolymerization of lignin. Catalyzes the C(alpha)-C(beta) cleavage of the propyl side chains of lignin. The sequence is that of Ligninase H2 (GLG4) from Phanerodontia chrysosporium (White-rot fungus).